We begin with the raw amino-acid sequence, 101 residues long: Protein Tat (101 aa).

Residues 1–12 (MEPVDPRLEPWK) show a composition bias toward basic and acidic residues. Residues 1–20 (MEPVDPRLEPWKHPGSQPKT) form a disordered region. The interaction with human CREBBP stretch occupies residues 1-24 (MEPVDPRLEPWKHPGSQPKTACTT). The interval 1–48 (MEPVDPRLEPWKHPGSQPKTACTTCYCKKCCFHCQVCFTKKALGISYG) is transactivation. Zn(2+)-binding residues include Cys-22, Cys-25, and Cys-27. A cysteine-rich region spans residues 22–37 (CTTCYCKKCCFHCQVC). The residue at position 28 (Lys-28) is an N6-acetyllysine; by host PCAF. Zn(2+) contacts are provided by Cys-30, His-33, Cys-34, and Cys-37. The core stretch occupies residues 38 to 48 (FTKKALGISYG). Positions 47–101 (YGRKKRRQRRRAPEDSQTHQVSLPKQPAPQFRGDPTGPKESKKKVERETETHPVD) are disordered. Positions 49 to 57 (RKKRRQRRR) match the Nuclear localization signal, RNA-binding (TAR), and protein transduction motif. Positions 49-86 (RKKRRQRRRAPEDSQTHQVSLPKQPAPQFRGDPTGPKE) are interaction with the host capping enzyme RNGTT. N6-acetyllysine; by host EP300 and GCN5L2 is present on residues Lys-50 and Lys-51. An asymmetric dimethylarginine; by host PRMT6 mark is found at Arg-52 and Arg-53. Lys-71 is covalently cross-linked (Glycyl lysine isopeptide (Lys-Gly) (interchain with G-Cter in ubiquitin)). The Cell attachment site motif lies at 78 to 80 (RGD). Over residues 83-101 (GPKESKKKVERETETHPVD) the composition is skewed to basic and acidic residues.

Belongs to the lentiviruses Tat family. Interacts with host CCNT1. Associates with the P-TEFb complex composed at least of Tat, P-TEFb (CDK9 and CCNT1), TAR RNA, RNA Pol II. Recruits the HATs CREBBP, TAF1/TFIID, EP300, PCAF and GCN5L2. Interacts with host KAT5/Tip60; this interaction targets the latter to degradation. Interacts with the host deacetylase SIRT1. Interacts with host capping enzyme RNGTT; this interaction stimulates RNGTT. Binds to host KDR, and to the host integrins ITGAV/ITGB3 and ITGA5/ITGB1. Interacts with host KPNB1/importin beta-1 without previous binding to KPNA1/importin alpha-1. Interacts with EIF2AK2. Interacts with host nucleosome assembly protein NAP1L1; this interaction may be required for the transport of Tat within the nucleus, since the two proteins interact at the nuclear rim. Interacts with host C1QBP/SF2P32; this interaction involves lysine-acetylated Tat. Interacts with the host chemokine receptors CCR2, CCR3 and CXCR4. Interacts with host DPP4/CD26; this interaction may trigger an anti-proliferative effect. Interacts with host LDLR. Interacts with the host extracellular matrix metalloproteinase MMP1. Interacts with host PRMT6; this interaction mediates Tat's methylation. Interacts with, and is ubiquitinated by MDM2/Hdm2. Interacts with host PSMC3 and HTATIP2. Interacts with STAB1; this interaction may overcome SATB1-mediated repression of IL2 and IL2RA (interleukin) in T cells by binding to the same domain than HDAC1. Interacts (when acetylated) with human CDK13, thereby increasing HIV-1 mRNA splicing and promoting the production of the doubly spliced HIV-1 protein Nef. Interacts with host TBP; this interaction modulates the activity of transcriptional pre-initiation complex. Interacts with host RELA. Interacts with host PLSCR1; this interaction negatively regulates Tat transactivation activity by altering its subcellular distribution. In terms of processing, asymmetrical arginine methylation by host PRMT6 seems to diminish the transactivation capacity of Tat and affects the interaction with host CCNT1. Acetylation by EP300, CREBBP, GCN5L2/GCN5 and PCAF regulates the transactivation activity of Tat. EP300-mediated acetylation of Lys-50 promotes dissociation of Tat from the TAR RNA through the competitive binding to PCAF's bromodomain. In addition, the non-acetylated Tat's N-terminus can also interact with PCAF. PCAF-mediated acetylation of Lys-28 enhances Tat's binding to CCNT1. Lys-50 is deacetylated by SIRT1. Post-translationally, polyubiquitination by host MDM2 does not target Tat to degradation, but activates its transactivation function and fosters interaction with CCNT1 and TAR RNA. In terms of processing, phosphorylated by EIF2AK2 on serine and threonine residues adjacent to the basic region important for TAR RNA binding and function. Phosphorylation of Tat by EIF2AK2 is dependent on the prior activation of EIF2AK2 by dsRNA.

It is found in the host nucleus. The protein localises to the host nucleolus. It localises to the host cytoplasm. The protein resides in the secreted. In terms of biological role, transcriptional activator that increases RNA Pol II processivity, thereby increasing the level of full-length viral transcripts. Recognizes a hairpin structure at the 5'-LTR of the nascent viral mRNAs referred to as the transactivation responsive RNA element (TAR) and recruits the cyclin T1-CDK9 complex (P-TEFb complex) that will in turn hyperphosphorylate the RNA polymerase II to allow efficient elongation. The CDK9 component of P-TEFb and other Tat-activated kinases hyperphosphorylate the C-terminus of RNA Pol II that becomes stabilized and much more processive. Other factors such as HTATSF1/Tat-SF1, SUPT5H/SPT5, and HTATIP2 are also important for Tat's function. Besides its effect on RNA Pol II processivity, Tat induces chromatin remodeling of proviral genes by recruiting the histone acetyltransferases (HATs) CREBBP, EP300 and PCAF to the chromatin. This also contributes to the increase in proviral transcription rate, especially when the provirus integrates in transcriptionally silent region of the host genome. To ensure maximal activation of the LTR, Tat mediates nuclear translocation of NF-kappa-B by interacting with host RELA. Through its interaction with host TBP, Tat may also modulate transcription initiation. Tat can reactivate a latently infected cell by penetrating in it and transactivating its LTR promoter. In the cytoplasm, Tat is thought to act as a translational activator of HIV-1 mRNAs. Functionally, extracellular circulating Tat can be endocytosed by surrounding uninfected cells via the binding to several surface receptors such as CD26, CXCR4, heparan sulfate proteoglycans (HSPG) or LDLR. Neurons are rarely infected, but they internalize Tat via their LDLR. Through its interaction with nuclear HATs, Tat is potentially able to control the acetylation-dependent cellular gene expression. Modulates the expression of many cellular genes involved in cell survival, proliferation or in coding for cytokines or cytokine receptors. Tat plays a role in T-cell and neurons apoptosis. Tat induced neurotoxicity and apoptosis probably contribute to neuroAIDS. Circulating Tat also acts as a chemokine-like and/or growth factor-like molecule that binds to specific receptors on the surface of the cells, affecting many cellular pathways. In the vascular system, Tat binds to ITGAV/ITGB3 and ITGA5/ITGB1 integrins dimers at the surface of endothelial cells and competes with bFGF for heparin-binding sites, leading to an excess of soluble bFGF. The chain is Protein Tat from Human immunodeficiency virus type 1 group M subtype B (isolate MN) (HIV-1).